The sequence spans 67 residues: MLCLPVFIILLLLASPAAPKSFETKVQSDLTRTDGNMETEENLGEVRKVYCCLGVRDDWCCAGQIQI.

Positions 1 to 19 are cleaved as a signal peptide; that stretch reads MLCLPVFIILLLLASPAAP. Positions 20–46 are excised as a propeptide; sequence KSFETKVQSDLTRTDGNMETEENLGEV.

The protein belongs to the conotoxin T superfamily. Contains 2 disulfide bonds that can be either 'C1-C3, C2-C4' or 'C1-C4, C2-C3', since these disulfide connectivities have been observed for conotoxins with cysteine framework V (for examples, see AC P0DQQ7 and AC P81755). In terms of tissue distribution, expressed by the venom duct.

The protein localises to the secreted. The polypeptide is Conotoxin Lt5.9 (Conus litteratus (Lettered cone)).